Here is a 303-residue protein sequence, read N- to C-terminus: Lipoyl synthase (303 aa).

Cys34, Cys39, Cys45, Cys60, Cys64, Cys67, and Ser273 together coordinate [4Fe-4S] cluster. The region spanning 46-262 (WSKKHATVMI…ERVARTKGFL (217 aa)) is the Radical SAM core domain.

Belongs to the radical SAM superfamily. Lipoyl synthase family. [4Fe-4S] cluster is required as a cofactor.

It localises to the cytoplasm. It catalyses the reaction [[Fe-S] cluster scaffold protein carrying a second [4Fe-4S](2+) cluster] + N(6)-octanoyl-L-lysyl-[protein] + 2 oxidized [2Fe-2S]-[ferredoxin] + 2 S-adenosyl-L-methionine + 4 H(+) = [[Fe-S] cluster scaffold protein] + N(6)-[(R)-dihydrolipoyl]-L-lysyl-[protein] + 4 Fe(3+) + 2 hydrogen sulfide + 2 5'-deoxyadenosine + 2 L-methionine + 2 reduced [2Fe-2S]-[ferredoxin]. It functions in the pathway protein modification; protein lipoylation via endogenous pathway; protein N(6)-(lipoyl)lysine from octanoyl-[acyl-carrier-protein]: step 2/2. In terms of biological role, catalyzes the radical-mediated insertion of two sulfur atoms into the C-6 and C-8 positions of the octanoyl moiety bound to the lipoyl domains of lipoate-dependent enzymes, thereby converting the octanoylated domains into lipoylated derivatives. The chain is Lipoyl synthase from Rickettsia bellii (strain OSU 85-389).